Reading from the N-terminus, the 445-residue chain is Ribosomal protein uS12 methylthiotransferase RimO (445 aa).

In terms of domain architecture, MTTase N-terminal spans 4–119 (IKVALVSLGC…LLESIKVFLK (116 aa)). [4Fe-4S] cluster contacts are provided by cysteine 13, cysteine 48, cysteine 82, cysteine 156, cysteine 160, and cysteine 163. In terms of domain architecture, Radical SAM core spans 142 to 372 (TTPTYTAYVR…MILQQSISKD (231 aa)). The 67-residue stretch at 375-441 (KEKIGKTYEV…EYDLIGVVYN (67 aa)) folds into the TRAM domain.

Belongs to the methylthiotransferase family. RimO subfamily. [4Fe-4S] cluster is required as a cofactor.

Its subcellular location is the cytoplasm. It catalyses the reaction L-aspartate(89)-[ribosomal protein uS12]-hydrogen + (sulfur carrier)-SH + AH2 + 2 S-adenosyl-L-methionine = 3-methylsulfanyl-L-aspartate(89)-[ribosomal protein uS12]-hydrogen + (sulfur carrier)-H + 5'-deoxyadenosine + L-methionine + A + S-adenosyl-L-homocysteine + 2 H(+). In terms of biological role, catalyzes the methylthiolation of an aspartic acid residue of ribosomal protein uS12. This is Ribosomal protein uS12 methylthiotransferase RimO from Clostridium botulinum (strain ATCC 19397 / Type A).